Reading from the N-terminus, the 446-residue chain is WEB family protein At3g56270 (446 aa).

The stretch at Thr313–Ser349 forms a coiled coil.

This sequence belongs to the WEB family.

The sequence is that of WEB family protein At3g56270 from Arabidopsis thaliana (Mouse-ear cress).